The primary structure comprises 351 residues: 2-Hydroxyacid oxidase 2 (351 aa).

One can recognise an FMN hydroxy acid dehydrogenase domain in the interval 2-351; that stretch reads SLVCLTDFQA…NRNLVQFSRL (350 aa). Residues 77–79, S106, and Q128 contribute to the FMN site; that span reads PTG. Y130 is an a 2-oxocarboxylate binding site. T156 provides a ligand contact to FMN. An a 2-oxocarboxylate-binding site is contributed by R165. A Phosphothreonine modification is found at T178. Residue K222 participates in FMN binding. The Proton acceptor role is filled by H246. R249 contacts a 2-oxocarboxylate. FMN contacts are provided by residues 277-281 and 300-301; these read DGGVR and GR. Residues 349-351 carry the Microbody targeting signal motif; sequence SRL.

Belongs to the FMN-dependent alpha-hydroxy acid dehydrogenase family. As to quaternary structure, homotetramer. It depends on FMN as a cofactor. In terms of tissue distribution, expressed in the liver and kidney.

The protein localises to the peroxisome. The catalysed reaction is a (2S)-2-hydroxycarboxylate + O2 = a 2-oxocarboxylate + H2O2. The enzyme catalyses 2-hydroxyhexadecanoate + O2 = 2-oxohexadecanoate + H2O2. It catalyses the reaction 2-hydroxyoctanoate + O2 = 2-oxooctanoate + H2O2. The protein operates within lipid metabolism; fatty acid metabolism. Oxidase that catalyzes the oxidation of medium and long chain hydroxyacids such as 2-hydroxyhexadecanoate and 2-hydroxyoctanoate, to the correspondong 2-oxoacids. Its role in the oxidation of 2-hydroxy fatty acids may contribute to the general pathway of fatty acid alpha-oxidation. Active in vitro with the artificial electron acceptor 2,6-dichlorophenolindophenol (DCIP), but O2 is believed to be the physiological electron acceptor, leading to the production of H2O2. Is not active on glycolate, glyoxylate, L-lactate and 2-hydroxybutanoate. This is 2-Hydroxyacid oxidase 2 (HAO2) from Homo sapiens (Human).